A 441-amino-acid polypeptide reads, in one-letter code: MSFEELGVSKWLSEALNSMKIHTPTTIQSACIPKILKGHDCIGGAKTGSGKTIAFAAPMLTQWSEDPSGIYGLVLTPTRELALQIAEQFAALGSSMNIKVSVIVGGEDIVKQALELQRRPHFVVATPGRLADHILNSGEDTVCGLRRVKYLILDEADRLLSNSFGGDLERCFNILPSTDKRQTLLFTATVTDAVRALKDRPVPKGKLPVFIHEVETVDKVAIPSTLSVKYVFVPSYVKEAYLHSILNLPQYSDSLSIIFTNRTATAELLRRTLRKLEFRVASLHSEMPQTERTNSLHRFKAGAAKILIATDVASRGLDIPTVELVVNYDIPADADDFIHRVGRTARAGRKGDAISIVAEKDVDRILAIEERINKKMDLIEDISDNKVIKDSLNKTSVAKREAFMDMDRENFGEKRKINKSKRQANEGTISIHESKKKKHHK.

Positions 1 to 29 (MSFEELGVSKWLSEALNSMKIHTPTTIQS) match the Q motif motif. The region spanning 32–208 (IPKILKGHDC…DRPVPKGKLP (177 aa)) is the Helicase ATP-binding domain. 45-52 (AKTGSGKT) is an ATP binding site. A DEAD box motif is present at residues 154 to 157 (DEAD). A Helicase C-terminal domain is found at 247 to 387 (NLPQYSDSLS…LIEDISDNKV (141 aa)). Residues 409–441 (ENFGEKRKINKSKRQANEGTISIHESKKKKHHK) are disordered.

It belongs to the DEAD box helicase family. DDX49/DBP8 subfamily.

It is found in the nucleus. It localises to the nucleolus. The enzyme catalyses ATP + H2O = ADP + phosphate + H(+). Its function is as follows. ATP-binding RNA helicase involved in 40S ribosomal subunit biogenesis and is required for the normal formation of 18S rRNAs through pre-rRNA processing at A0, A1 and A2 sites. Required for vegetative growth. The protein is ATP-dependent RNA helicase DBP8 (DBP8) of Debaryomyces hansenii (strain ATCC 36239 / CBS 767 / BCRC 21394 / JCM 1990 / NBRC 0083 / IGC 2968) (Yeast).